Here is a 294-residue protein sequence, read N- to C-terminus: GTPase Era (294 aa).

Residues 2–171 (NSGVVTIIGR…LSLLIELLPE (170 aa)) enclose the Era-type G domain. A G1 region spans residues 10 to 17 (GRPSAGKS). GTP is bound at residue 10–17 (GRPSAGKS). Residues 36-40 (QTTRN) form a G2 region. Positions 57–60 (DTPG) are G3. GTP is bound by residues 57–61 (DTPGY) and 119–122 (NKAD). A G4 region spans residues 119 to 122 (NKAD). Residues 150-152 (ISA) form a G5 region. The region spanning 202-280 (TREEIPHALY…QLDLQVRVNK (79 aa)) is the KH type-2 domain.

It belongs to the TRAFAC class TrmE-Era-EngA-EngB-Septin-like GTPase superfamily. Era GTPase family. In terms of assembly, monomer.

The protein localises to the cytoplasm. It localises to the cell inner membrane. An essential GTPase that binds both GDP and GTP, with rapid nucleotide exchange. Plays a role in 16S rRNA processing and 30S ribosomal subunit biogenesis and possibly also in cell cycle regulation and energy metabolism. The protein is GTPase Era of Treponema denticola (strain ATCC 35405 / DSM 14222 / CIP 103919 / JCM 8153 / KCTC 15104).